Consider the following 499-residue polypeptide: UPF0159 protein Ta1429 (499 aa).

2 consecutive ThyX domains span residues 1 to 246 (MIDR…ALSQ) and 271 to 476 (EKVR…IKFV).

It belongs to the UPF0159 family.

This Thermoplasma acidophilum (strain ATCC 25905 / DSM 1728 / JCM 9062 / NBRC 15155 / AMRC-C165) protein is UPF0159 protein Ta1429.